A 41-amino-acid chain; its full sequence is Large ribosomal subunit protein bL36 (41 aa).

It belongs to the bacterial ribosomal protein bL36 family.

The sequence is that of Large ribosomal subunit protein bL36 from Methylobacterium nodulans (strain LMG 21967 / CNCM I-2342 / ORS 2060).